We begin with the raw amino-acid sequence, 158 residues long: NAD(P)H-quinone oxidoreductase subunit J, chloroplastic (158 aa).

The protein belongs to the complex I 30 kDa subunit family. NDH is composed of at least 16 different subunits, 5 of which are encoded in the nucleus.

Its subcellular location is the plastid. It localises to the chloroplast thylakoid membrane. It catalyses the reaction a plastoquinone + NADH + (n+1) H(+)(in) = a plastoquinol + NAD(+) + n H(+)(out). The catalysed reaction is a plastoquinone + NADPH + (n+1) H(+)(in) = a plastoquinol + NADP(+) + n H(+)(out). Functionally, NDH shuttles electrons from NAD(P)H:plastoquinone, via FMN and iron-sulfur (Fe-S) centers, to quinones in the photosynthetic chain and possibly in a chloroplast respiratory chain. The immediate electron acceptor for the enzyme in this species is believed to be plastoquinone. Couples the redox reaction to proton translocation, and thus conserves the redox energy in a proton gradient. This chain is NAD(P)H-quinone oxidoreductase subunit J, chloroplastic, found in Solanum bulbocastanum (Wild potato).